A 249-amino-acid polypeptide reads, in one-letter code: Bax inhibitor 1 (249 aa).

A run of 6 helical transmembrane segments spans residues 39–59 (LVYLTLCVALAASAVGAYLHV), 65–85 (GMLTMLGCVGSIAWLFSVPVF), 93–113 (ILLAAALLEGASVGPLIKLAV), 119–139 (ILVTAFVGTAIAFGCFTCAAI), 151–171 (GLLSSGLSILLWLQFAASIFG), and 213–233 (HALTLFTDFVAVLVRILVIML).

This sequence belongs to the BI1 family. Ubiquitous.

The protein localises to the membrane. In terms of biological role, suppressor of apoptosis. The protein is Bax inhibitor 1 (BI1) of Oryza sativa subsp. japonica (Rice).